Here is a 456-residue protein sequence, read N- to C-terminus: Two pore potassium channel c (456 aa).

Positions 1-19 are enriched in low complexity; it reads MDTEPLLSPLSPSPHLLHP. Residues 1–112 form a disordered region; sequence MDTEPLLSPL…PPSLFDFIGG (112 aa). Residues 1 to 152 lie on the Cytoplasmic side of the membrane; that stretch reads MDTEPLLSPL…RNPPPPPRRP (152 aa). The span at 52–67 shows a compositional bias: pro residues; sequence HPPPPPPPPPPPPPPP. The helical transmembrane segment at 153-173 threads the bilayer; that stretch reads AIVLHAFLFLLAYLAMGVTFY. An intramembrane region (pore-forming) is located at residues 192–211; the sequence is DALYFCIVTLCTIGYGDITP. Residues 223–243 traverse the membrane as a helical segment; it reads FVLIGFGFVDILLSGMVSYVL. The Cytoplasmic segment spans residues 244 to 279; sequence DLQEHLLITALKNPRSVRKHRHNYIFDLKKGRMRVR. The chain crosses the membrane as a helical span at residues 280–300; the sequence is MKVALALTVVAICVGVGAAVL. The pore-forming intramembrane region spans 310–329; the sequence is DAVYLAVMSVTTVGYGDHAF. The helical transmembrane segment at 336-356 threads the bilayer; that stretch reads LFASAWLLVSTLAVARAFLYL. The Cytoplasmic portion of the chain corresponds to 357–456; the sequence is AEMRIDKRHR…LNEKKKGKKS (100 aa). EF-hand domains are found at residues 373–408 and 412–447; these read LSRDMTVSEFLAADIDNNGYVTKSEFVVYKLKEMGK and KDIMMICDQFQRMDSGNCGKITLSDLLESHQLVTDL. 8 residues coordinate Ca(2+): D386, D388, N390, Y392, E397, D425, K431, and D436.

It belongs to the two pore domain potassium channel (TC 1.A.1.7) family. As to quaternary structure, homodimer.

The protein localises to the membrane. Inward-rectifying potassium channel. The polypeptide is Two pore potassium channel c (TPKC) (Oryza sativa subsp. japonica (Rice)).